A 354-amino-acid chain; its full sequence is Photosystem II protein D1 3 (354 aa).

The next 3 membrane-spanning stretches (helical) occupy residues 29-46 (YIGW…TATT), 118-133 (HFLI…EWEL), and 142-156 (WIAV…AATA). His118 contacts chlorophyll a. Pheophytin a is bound at residue Tyr126. 2 residues coordinate [CaMn4O5] cluster: Asp170 and Glu189. The chain crosses the membrane as a helical span at residues 197 to 218 (FHQLGVAGVFGGALFSAMHGSL). Residue His198 participates in chlorophyll a binding. A quinone is bound by residues His215 and 264–265 (SF). Fe cation is bound at residue His215. His272 contacts Fe cation. The helical transmembrane segment at 274–288 (FLAAWPVIGIWFTAL) threads the bilayer. 4 residues coordinate [CaMn4O5] cluster: His332, Glu333, Asp342, and Ala344. A propeptide spanning residues 345–354 (AVEVAPAVRG) is cleaved from the precursor.

It belongs to the reaction center PufL/M/PsbA/D family. PSII is composed of 1 copy each of membrane proteins PsbA, PsbB, PsbC, PsbD, PsbE, PsbF, PsbH, PsbI, PsbJ, PsbK, PsbL, PsbM, PsbT, PsbX, PsbY, PsbZ, Psb30/Ycf12, peripheral proteins PsbO, CyanoQ (PsbQ), PsbU, PsbV and a large number of cofactors. It forms dimeric complexes. The D1/D2 heterodimer binds P680, chlorophylls that are the primary electron donor of PSII, and subsequent electron acceptors. It shares a non-heme iron and each subunit binds pheophytin, quinone, additional chlorophylls, carotenoids and lipids. D1 provides most of the ligands for the Mn4-Ca-O5 cluster of the oxygen-evolving complex (OEC). There is also a Cl(-1) ion associated with D1 and D2, which is required for oxygen evolution. The PSII complex binds additional chlorophylls, carotenoids and specific lipids. serves as cofactor. Tyr-161 forms a radical intermediate that is referred to as redox-active TyrZ, YZ or Y-Z. In terms of processing, C-terminally processed by CtpA; processing is essential to allow assembly of the oxygen-evolving complex and thus photosynthetic growth.

It localises to the cellular thylakoid membrane. It catalyses the reaction 2 a plastoquinone + 4 hnu + 2 H2O = 2 a plastoquinol + O2. Its function is as follows. Photosystem II (PSII) is a light-driven water:plastoquinone oxidoreductase that uses light energy to abstract electrons from H(2)O, generating O(2) and a proton gradient subsequently used for ATP formation. It consists of a core antenna complex that captures photons, and an electron transfer chain that converts photonic excitation into a charge separation. The D1/D2 (PsbA/PsbD) reaction center heterodimer binds P680, the primary electron donor of PSII as well as several subsequent electron acceptors. This Synechococcus sp. (strain JA-3-3Ab) (Cyanobacteria bacterium Yellowstone A-Prime) protein is Photosystem II protein D1 3.